The sequence spans 128 residues: Large ribosomal subunit protein bL20 (128 aa).

This sequence belongs to the bacterial ribosomal protein bL20 family.

In terms of biological role, binds directly to 23S ribosomal RNA and is necessary for the in vitro assembly process of the 50S ribosomal subunit. It is not involved in the protein synthesizing functions of that subunit. This is Large ribosomal subunit protein bL20 from Anaplasma marginale (strain Florida).